Consider the following 86-residue polypeptide: Weak neurotoxin 6 (86 aa).

Positions 1 to 21 (MKTLLLTLVVVTIVCLDLGYT) are cleaved as a signal peptide. 5 disulfide bridges follow: Cys24–Cys45, Cys27–Cys32, Cys38–Cys63, Cys67–Cys78, and Cys79–Cys84.

This sequence belongs to the three-finger toxin family. Ancestral subfamily. Orphan group II sub-subfamily. As to expression, expressed by the venom gland.

It is found in the secreted. Its function is as follows. Binds with low affinity to muscular (alpha-1-beta-1-delta-epsilon/CHRNA1-CHRNB1-CHRND-CHRNE) and very low affinity to neuronal (alpha-7/CHRNA7) nicotinic acetylcholine receptor (nAChR). The polypeptide is Weak neurotoxin 6 (Naja sputatrix (Malayan spitting cobra)).